Consider the following 353-residue polypeptide: Ubiquinol oxidase 2, mitochondrial (353 aa).

Residues 1-21 (MSQLITKAALRVLLVCGRGNC) constitute a mitochondrion transit peptide. A helical membrane pass occupies residues 178 to 198 (AMMLETVAAVPGMVGGMLLHL). The Fe cation site is built by Glu182, Glu221, and His224. The helical transmembrane segment at 240–260 (LLVMLVQGIFFNSFFVCYVIS) threads the bilayer. 3 residues coordinate Fe cation: Glu272, Glu323, and His326.

Belongs to the alternative oxidase family. Homodimer; disulfide-linked. Requires Fe cation as cofactor. In terms of tissue distribution, maximally expressed in dry seeds. Detected in roots, stems and leaves.

It is found in the mitochondrion inner membrane. It carries out the reaction 2 a ubiquinol + O2 = 2 a ubiquinone + 2 H2O. Functionally, catalyzes the cyanide-resistant oxidation of ubiquinol and the reduction of molecular oxygen to water, but does not translocate protons and consequently is not linked to oxidative phosphorylation. May increase respiration when the cytochrome respiratory pathway is restricted, or in response to low temperatures. This Arabidopsis thaliana (Mouse-ear cress) protein is Ubiquinol oxidase 2, mitochondrial (AOX2).